Consider the following 194-residue polypeptide: Probable RNA 2'-phosphotransferase (194 aa).

Belongs to the KptA/TPT1 family.

Removes the 2'-phosphate from RNA via an intermediate in which the phosphate is ADP-ribosylated by NAD followed by a presumed transesterification to release the RNA and generate ADP-ribose 1''-2''-cyclic phosphate (APPR&gt;P). May function as an ADP-ribosylase. This Burkholderia lata (strain ATCC 17760 / DSM 23089 / LMG 22485 / NCIMB 9086 / R18194 / 383) protein is Probable RNA 2'-phosphotransferase.